The sequence spans 96 residues: Protein C4 (96 aa).

A lipid anchor (N-myristoyl glycine; by host) is attached at G2. A disordered region spans residues 66–96; that stretch reads STDDLQGEDSRQPMTLTPRQLTQDVSRRLLM. Positions 77 to 89 are enriched in polar residues; sequence QPMTLTPRQLTQD.

This sequence belongs to the geminiviridae protein AC4/C4 family.

The protein localises to the host cell membrane. In terms of biological role, pathogenicity determinant. May act as a suppressor of RNA-mediated gene silencing, also known as post-transcriptional gene silencing (PTGS), a mechanism of plant viral defense that limits the accumulation of viral RNAs. The chain is Protein C4 from Solanum lycopersicum (Tomato).